A 104-amino-acid chain; its full sequence is Small ribosomal subunit protein uS10 (104 aa).

It belongs to the universal ribosomal protein uS10 family. As to quaternary structure, part of the 30S ribosomal subunit.

Involved in the binding of tRNA to the ribosomes. This chain is Small ribosomal subunit protein uS10, found in Maricaulis maris (strain MCS10) (Caulobacter maris).